Consider the following 95-residue polypeptide: MSIDESTAAKVAKLARIKVEDDALPALANEFNAILGFIEQLEEVDVEGVDPMVSVTPMALPRREDVVTDGDQQTRVLTNAPDAREGFFSVPKVVE.

The protein belongs to the GatC family. Heterotrimer of A, B and C subunits.

The enzyme catalyses L-glutamyl-tRNA(Gln) + L-glutamine + ATP + H2O = L-glutaminyl-tRNA(Gln) + L-glutamate + ADP + phosphate + H(+). The catalysed reaction is L-aspartyl-tRNA(Asn) + L-glutamine + ATP + H2O = L-asparaginyl-tRNA(Asn) + L-glutamate + ADP + phosphate + 2 H(+). Functionally, allows the formation of correctly charged Asn-tRNA(Asn) or Gln-tRNA(Gln) through the transamidation of misacylated Asp-tRNA(Asn) or Glu-tRNA(Gln) in organisms which lack either or both of asparaginyl-tRNA or glutaminyl-tRNA synthetases. The reaction takes place in the presence of glutamine and ATP through an activated phospho-Asp-tRNA(Asn) or phospho-Glu-tRNA(Gln). This chain is Aspartyl/glutamyl-tRNA(Asn/Gln) amidotransferase subunit C, found in Jannaschia sp. (strain CCS1).